Here is a 300-residue protein sequence, read N- to C-terminus: Phosphatidylserine decarboxylase proenzyme (300 aa).

Catalysis depends on charge relay system; for autoendoproteolytic cleavage activity residues Asp-113, His-169, and Ser-256. Ser-256 acts as the Schiff-base intermediate with substrate; via pyruvic acid; for decarboxylase activity in catalysis. Ser-256 carries the pyruvic acid (Ser); by autocatalysis modification.

This sequence belongs to the phosphatidylserine decarboxylase family. PSD-B subfamily. Prokaryotic type II sub-subfamily. In terms of assembly, heterodimer of a large membrane-associated beta subunit and a small pyruvoyl-containing alpha subunit. The cofactor is pyruvate. Is synthesized initially as an inactive proenzyme. Formation of the active enzyme involves a self-maturation process in which the active site pyruvoyl group is generated from an internal serine residue via an autocatalytic post-translational modification. Two non-identical subunits are generated from the proenzyme in this reaction, and the pyruvate is formed at the N-terminus of the alpha chain, which is derived from the carboxyl end of the proenzyme. The autoendoproteolytic cleavage occurs by a canonical serine protease mechanism, in which the side chain hydroxyl group of the serine supplies its oxygen atom to form the C-terminus of the beta chain, while the remainder of the serine residue undergoes an oxidative deamination to produce ammonia and the pyruvoyl prosthetic group on the alpha chain. During this reaction, the Ser that is part of the protease active site of the proenzyme becomes the pyruvoyl prosthetic group, which constitutes an essential element of the active site of the mature decarboxylase.

The protein localises to the cell membrane. It catalyses the reaction a 1,2-diacyl-sn-glycero-3-phospho-L-serine + H(+) = a 1,2-diacyl-sn-glycero-3-phosphoethanolamine + CO2. It functions in the pathway phospholipid metabolism; phosphatidylethanolamine biosynthesis; phosphatidylethanolamine from CDP-diacylglycerol: step 2/2. Catalyzes the formation of phosphatidylethanolamine (PtdEtn) from phosphatidylserine (PtdSer). This is Phosphatidylserine decarboxylase proenzyme from Ruminiclostridium cellulolyticum (strain ATCC 35319 / DSM 5812 / JCM 6584 / H10) (Clostridium cellulolyticum).